The primary structure comprises 209 residues: Uracil phosphoribosyltransferase (209 aa).

Residues R79, R104, and 131 to 139 contribute to the 5-phospho-alpha-D-ribose 1-diphosphate site; that span reads DPMLATGAS. Residues I194 and 199-201 contribute to the uracil site; that span reads GDA. Position 200 (D200) interacts with 5-phospho-alpha-D-ribose 1-diphosphate.

The protein belongs to the UPRTase family. Mg(2+) is required as a cofactor.

The enzyme catalyses UMP + diphosphate = 5-phospho-alpha-D-ribose 1-diphosphate + uracil. It participates in pyrimidine metabolism; UMP biosynthesis via salvage pathway; UMP from uracil: step 1/1. Its activity is regulated as follows. Allosterically activated by GTP. In terms of biological role, catalyzes the conversion of uracil and 5-phospho-alpha-D-ribose 1-diphosphate (PRPP) to UMP and diphosphate. This is Uracil phosphoribosyltransferase from Staphylococcus epidermidis (strain ATCC 35984 / DSM 28319 / BCRC 17069 / CCUG 31568 / BM 3577 / RP62A).